We begin with the raw amino-acid sequence, 609 residues long: tRNA 5-methylaminomethyl-2-thiouridine biosynthesis bifunctional protein MnmC (609 aa).

The tract at residues Met-1–Met-229 is tRNA (mnm(5)s(2)U34)-methyltransferase. Residues Ile-237–Pro-609 form an FAD-dependent cmnm(5)s(2)U34 oxidoreductase region.

This sequence in the N-terminal section; belongs to the methyltransferase superfamily. tRNA (mnm(5)s(2)U34)-methyltransferase family. In the C-terminal section; belongs to the DAO family. It depends on FAD as a cofactor.

The protein localises to the cytoplasm. The catalysed reaction is 5-aminomethyl-2-thiouridine(34) in tRNA + S-adenosyl-L-methionine = 5-methylaminomethyl-2-thiouridine(34) in tRNA + S-adenosyl-L-homocysteine + H(+). Functionally, catalyzes the last two steps in the biosynthesis of 5-methylaminomethyl-2-thiouridine (mnm(5)s(2)U) at the wobble position (U34) in tRNA. Catalyzes the FAD-dependent demodification of cmnm(5)s(2)U34 to nm(5)s(2)U34, followed by the transfer of a methyl group from S-adenosyl-L-methionine to nm(5)s(2)U34, to form mnm(5)s(2)U34. The chain is tRNA 5-methylaminomethyl-2-thiouridine biosynthesis bifunctional protein MnmC (mnmC) from Albidiferax ferrireducens (strain ATCC BAA-621 / DSM 15236 / T118) (Rhodoferax ferrireducens).